Reading from the N-terminus, the 821-residue chain is Pentatricopeptide repeat-containing protein At4g04790, mitochondrial (821 aa).

The transit peptide at methionine 1–lysine 74 directs the protein to the mitochondrion. PPR repeat units follow at residues serine 372–isoleucine 406, serine 407–proline 441, asparagine 442–proline 476, asparagine 477–proline 511, aspartate 512–glutamine 542, threonine 544–proline 574, and glutamine 578–valine 612. The disordered stretch occupies residues alanine 801–lysine 821.

The protein belongs to the PPR family. P subfamily.

The protein resides in the mitochondrion. The chain is Pentatricopeptide repeat-containing protein At4g04790, mitochondrial from Arabidopsis thaliana (Mouse-ear cress).